The sequence spans 178 residues: Negative modulator of initiation of replication (178 aa).

Residues 113 to 117 form an interaction with DNA region; the sequence is RTRVY.

This sequence belongs to the SeqA family. As to quaternary structure, homodimer. Polymerizes to form helical filaments.

The protein resides in the cytoplasm. Its function is as follows. Negative regulator of replication initiation, which contributes to regulation of DNA replication and ensures that replication initiation occurs exactly once per chromosome per cell cycle. Binds to pairs of hemimethylated GATC sequences in the oriC region, thus preventing assembly of replication proteins and re-initiation at newly replicated origins. Repression is relieved when the region becomes fully methylated. The chain is Negative modulator of initiation of replication from Photobacterium profundum (strain SS9).